Here is a 397-residue protein sequence, read N- to C-terminus: MGFRIRESLLLNLRKVPGSRVKARETMVSVTMATSEWIQFFKEAGIPPGPAVNYAVMFVDNRIQKSMLLDLNKEIMNELGVTVVGDIIAILKHAKVVHRQDMCKAATASVPCTPSPLQGELRRGASSAASRMIANSLNHDSPPHTPARRSDNSTSKISVTVSNKVAVKNAKAAALAHREEESLVVPTKRRRVTAEMEGKYIIHMPKGTTPRTRKILEQQQAAKGLHRTSVFDRLGAETKADTTTGTKPTGVFSRLGATPEMDEELAWDSDNDSSSSSVLQYAGVLKKLGRGPTKASPQPALTVKAKATSSATTLASTPKLRRLALPSRPGPEKKPESLPKVSILKRLGKAAVVSEAQDSQVTSTKSPTVRCIVPDPPAPLASQRPPRRRWRRTCKDC.

Residues Ser115 and Ser141 each carry the phosphoserine modification. Residues 135-156 form a disordered region; it reads NSLNHDSPPHTPARRSDNSTSK. Lys239 participates in a covalent cross-link: Glycyl lysine isopeptide (Lys-Gly) (interchain with G-Cter in SUMO2). Ser269 and Ser296 each carry phosphoserine. Residues 289-316 are disordered; sequence GRGPTKASPQPALTVKAKATSSATTLAS. Low complexity predominate over residues 300 to 316; it reads ALTVKAKATSSATTLAS. Ser342 is subject to Phosphoserine. The segment at 354-397 is disordered; sequence SEAQDSQVTSTKSPTVRCIVPDPPAPLASQRPPRRRWRRTCKDC. The span at 356 to 367 shows a compositional bias: polar residues; sequence AQDSQVTSTKSP. The span at 385-397 shows a compositional bias: basic residues; sequence PPRRRWRRTCKDC.

This is an uncharacterized protein from Rattus norvegicus (Rat).